Reading from the N-terminus, the 167-residue chain is CS6 fimbrial subunit B (167 aa).

An N-terminal signal peptide occupies residues 1-21 (MLKKIIPAIVLIAGTSGVVNA).

It localises to the fimbrium. This Escherichia coli protein is CS6 fimbrial subunit B (cssB).